A 141-amino-acid chain; its full sequence is Large ribosomal subunit protein uL11 (141 aa).

It belongs to the universal ribosomal protein uL11 family. As to quaternary structure, part of the ribosomal stalk of the 50S ribosomal subunit. Interacts with L10 and the large rRNA to form the base of the stalk. L10 forms an elongated spine to which L12 dimers bind in a sequential fashion forming a multimeric L10(L12)X complex. Post-translationally, one or more lysine residues are methylated.

Its function is as follows. Forms part of the ribosomal stalk which helps the ribosome interact with GTP-bound translation factors. The polypeptide is Large ribosomal subunit protein uL11 (Ligilactobacillus salivarius (strain UCC118) (Lactobacillus salivarius)).